The primary structure comprises 451 residues: Phenylalanine-4-hydroxylase (451 aa).

Ser-16 bears the Phosphoserine; by PKA mark. An ACT domain is found at 35–113; the sequence is SLIFSLKEEV…TVHELSRDKK (79 aa). His-284, His-289, and Glu-329 together coordinate Fe cation.

Belongs to the biopterin-dependent aromatic amino acid hydroxylase family. As to quaternary structure, homodimer and homotetramer. Fe(2+) is required as a cofactor. In terms of processing, phosphorylation at Ser-16 increases basal activity and facilitates activation by the substrate phenylalanine.

The enzyme catalyses (6R)-L-erythro-5,6,7,8-tetrahydrobiopterin + L-phenylalanine + O2 = (4aS,6R)-4a-hydroxy-L-erythro-5,6,7,8-tetrahydrobiopterin + L-tyrosine. It participates in amino-acid degradation; L-phenylalanine degradation; acetoacetate and fumarate from L-phenylalanine: step 1/6. Its activity is regulated as follows. N-terminal region of PAH is thought to contain allosteric binding sites for phenylalanine and to constitute an 'inhibitory' domain that regulates the activity of a catalytic domain in the C-terminal portion of the molecule. Catalyzes the hydroxylation of L-phenylalanine to L-tyrosine. This Bos taurus (Bovine) protein is Phenylalanine-4-hydroxylase (PAH).